A 116-amino-acid polypeptide reads, in one-letter code: NADH-ubiquinone oxidoreductase chain 3 (116 aa).

3 helical membrane passes run 3–23 (LIST…LVSF), 56–76 (FFLI…LLPL), and 87–107 (LTFM…IYEW).

This sequence belongs to the complex I subunit 3 family.

Its subcellular location is the mitochondrion membrane. It carries out the reaction a ubiquinone + NADH + 5 H(+)(in) = a ubiquinol + NAD(+) + 4 H(+)(out). Core subunit of the mitochondrial membrane respiratory chain NADH dehydrogenase (Complex I) that is believed to belong to the minimal assembly required for catalysis. Complex I functions in the transfer of electrons from NADH to the respiratory chain. The immediate electron acceptor for the enzyme is believed to be ubiquinone. The polypeptide is NADH-ubiquinone oxidoreductase chain 3 (MT-ND3) (Gadus morhua (Atlantic cod)).